The following is a 345-amino-acid chain: Selenide, water dikinase (345 aa).

Residue Cys16 is part of the active site. Residues Lys19 and 46 to 48 (TSD) contribute to the ATP site. Residue Asp49 coordinates Mg(2+). ATP is bound by residues Asp66, Asp89, and 136–138 (GHT). Residue Asp89 coordinates Mg(2+). Asp224 provides a ligand contact to Mg(2+).

The protein belongs to the selenophosphate synthase 1 family. Class I subfamily. In terms of assembly, homodimer. The cofactor is Mg(2+).

It carries out the reaction hydrogenselenide + ATP + H2O = selenophosphate + AMP + phosphate + 2 H(+). Functionally, synthesizes selenophosphate from selenide and ATP. The chain is Selenide, water dikinase from Clostridium botulinum (strain Alaska E43 / Type E3).